A 397-amino-acid chain; its full sequence is Phosphoglycerate kinase (397 aa).

Residues 21-23, arginine 36, 59-62, arginine 118, and arginine 151 contribute to the substrate site; these read DFN and HCGR. Residues lysine 201, glutamate 323, and 353-356 contribute to the ATP site; that span reads GGDT.

It belongs to the phosphoglycerate kinase family. Monomer.

Its subcellular location is the cytoplasm. The enzyme catalyses (2R)-3-phosphoglycerate + ATP = (2R)-3-phospho-glyceroyl phosphate + ADP. The protein operates within carbohydrate degradation; glycolysis; pyruvate from D-glyceraldehyde 3-phosphate: step 2/5. The polypeptide is Phosphoglycerate kinase (Bartonella henselae (strain ATCC 49882 / DSM 28221 / CCUG 30454 / Houston 1) (Rochalimaea henselae)).